The following is a 258-amino-acid chain: MNKPLLSELIIDIGNTSIAFASFKDNKINLFVKMKTNLMLRHDEVFSFFKENFDFNVNQVFISSVVPILNGIFENVIFSFFKIKPLFISFDLNYDLTFNPYKSGKFLLGSDVFANLVAAIENYSFENVLVVDLGTACTIFAVSRQDGILGGLINSGPLINFNSLLDNAYLLKKFSISTPSNLLERTTSGSVNSGLFYQYKYLIEGVYRDIKKMYKKEFNLIIAGGNANLLLPLIEIEFIFNIHLTVEGIRILGNSIVF.

12–19 lines the ATP pocket; that stretch reads DIGNTSIA. Substrate-binding positions include tyrosine 94 and 109–112; that span reads GSDV. Residue aspartate 111 is the Proton acceptor of the active site. Residue aspartate 132 participates in K(+) binding. Threonine 135 serves as a coordination point for ATP. Threonine 187 is a binding site for substrate.

The protein belongs to the type III pantothenate kinase family. As to quaternary structure, homodimer. It depends on NH4(+) as a cofactor. Requires K(+) as cofactor.

The protein localises to the cytoplasm. The enzyme catalyses (R)-pantothenate + ATP = (R)-4'-phosphopantothenate + ADP + H(+). It functions in the pathway cofactor biosynthesis; coenzyme A biosynthesis; CoA from (R)-pantothenate: step 1/5. Functionally, catalyzes the phosphorylation of pantothenate (Pan), the first step in CoA biosynthesis. The chain is Type III pantothenate kinase from Borreliella afzelii (strain PKo) (Borrelia afzelii).